The chain runs to 419 residues: Interferon regulatory factor 3 (419 aa).

Thr3 is subject to Phosphothreonine. Residues 5-111 (KPRILPWLIS…DPHKIYEFVT (107 aa)) constitute a DNA-binding region (IRF tryptophan pentad repeat). Ser14 carries the phosphoserine modification. Phosphothreonine is present on Thr75. Ser97 and Ser123 each carry phosphoserine. The segment at 118-137 (PEPDTSLDLSGRYSTSDTHE) is disordered. The tract at residues 140–419 (LDKLLSGMDL…LRDLVEDMDF (280 aa)) is mediates interaction with ZDHHC11. Lys191 participates in a covalent cross-link: Glycyl lysine isopeptide (Lys-Gly) (interchain with G-Cter in ISG15). Residues 198–358 (DEWEFQVTVF…SWPQDEPWVK (161 aa)) are interaction with HERC5. Thr235 and Thr251 each carry phosphothreonine. A disulfide bond links Cys265 and Cys287. Residues Lys358 and Lys364 each participate in a glycyl lysine isopeptide (Lys-Gly) (interchain with G-Cter in ISG15) cross-link. Lys364 bears the N6-acetyllysine mark. Ser383 carries the post-translational modification Phosphoserine. Diphosphoserine is present on Ser384. Ser384 carries the phosphoserine; by TBK1 modification. Ser394 carries the phosphoserine; by IKKE modification. Ser396 carries the post-translational modification Phosphoserine. The residue at position 402 (Thr402) is a Phosphothreonine.

Belongs to the IRF family. Monomer. Homodimer; phosphorylation-induced. Interacts (when phosphorylated) with CREBBP. Interacts with MAVS (via phosphorylated pLxIS motif). Interacts with TICAM1 (via phosphorylated pLxIS motif). Interacts with STING1 (via phosphorylated pLxIS motif). Interacts with IKBKE and TBK1. Interacts with TICAM2. Interacts with RBCK1. Interacts with HERC5. Interacts with DDX3X; the interaction allows the phosphorylation and activation of IRF3 by IKBKE. Interacts with TRIM21 and ULK1, in the presence of TRIM21; this interaction leads to IRF3 degradation by autophagy. Interacts with RIOK3; RIOK3 probably mediates the interaction of TBK1 with IRF3. Interacts with ILRUN; the interaction inhibits IRF3 binding to its DNA consensus sequence. Interacts with LYAR; this interaction impairs IRF3 DNA-binding activity. Interacts with TRAF3. Interacts with ZDHHC11; ZDHHC11 recruits IRF3 to STING1 upon DNA virus infection and thereby promotes IRF3 activation. Interacts with HSP90AA1; the interaction mediates IRF3 association with TOMM70. Interacts with BCL2; the interaction decreases upon Sendai virus infection. Interacts with BAX; the interaction is direct, increases upon virus infection and mediates the formation of the apoptosis complex TOMM70:HSP90AA1:IRF3:BAX. Interacts with DDX56. Interacts with NBR1. As to quaternary structure, (Microbial infection) Interacts with Porcine epidemic diarrhea virus E protein; this interaction prevents IRF3 translocation to the nucleus and thereby prevents type I interferon production. In terms of assembly, (Microbial infection) Interacts with African swine fever virus (ASFV) P14.5/E120R; this interaction interferes with the recruitment of IRF3 to TBK1, which in turn suppresses IRF3 phosphorylation, decreasing interferon production via the cGAS/STING pathway. (Microbial infection) Interacts with African swine fever virus (ASFV) MGF360-14L; this interaction mediates degradation of IRF3 through TRIM21 and ubiquitin-meditated proteolysis. As to quaternary structure, (Microbial infection) Interacts with African swine fever virus (ASFV) E301R; this interaction inhibits nuclear translocation of IRF3 to the nucleus. In terms of assembly, (Microbial infection) Interacts with African swine fever virus (ASFV) minor capsid protein M1249L; this interaction mediates IRF3 degradation. Constitutively phosphorylated on many Ser/Thr residues. Activated following phosphorylation by TBK1 and IKBKE. Innate adapter proteins, such as MAVS, STING1 or TICAM1, are first activated by viral RNA, cytosolic DNA, and bacterial lipopolysaccharide (LPS), respectively, leading to activation of the kinases TBK1 and IKBKE. These kinases then phosphorylate the adapter proteins on the pLxIS motif, leading to recruitment of IRF3, thereby licensing IRF3 for phosphorylation by TBK1. Phosphorylation at Ser-384 is followed by pyrophosphorylation at the same residue, promoting phosphorylation at Ser-394. Phosphorylated IRF3 dissociates from the adapter proteins, dimerizes, and then enters the nucleus to induce IFNs. In terms of processing, pyrophosphorylated by UAP1 following phosphorylation at Ser-384 by TBK1. Pyrophosphorylation promotes subsequent phosphorylation at Ser-394, leading to homodimerization of IRF3. Post-translationally, acetylation at Lys-364 by KAT8 inhibits recruimtent to promoters and transcription factor activity. Acetylation by KAT8 is promoted by phosphorylation at Ser-394. Ubiquitinated; ubiquitination involves RBCK1 leading to proteasomal degradation. Polyubiquitinated; ubiquitination involves TRIM21 leading to proteasomal degradation. Ubiquitinated by UBE3C, leading to its degradation. Deubiquitinated by USP5 on both 'Lys-48'-linked unanchored and 'Lys-63'-linked anchored polyubiquitin, leading to inhibition of antiviral innate immunity. In terms of processing, ISGylated by HERC5 resulting in sustained IRF3 activation and in the inhibition of IRF3 ubiquitination by disrupting PIN1 binding. The phosphorylation state of IRF3 does not alter ISGylation. Post-translationally, (Microbial infection) Phosphorylated by pseudorabies virus protein kinase UL13; leading to decreased IRF3 binding to the IRF3-responsive promoters and downstream ISG expression. Proteolytically cleaved by apoptotic caspases during apoptosis, leading to its inactivation. Cleavage by CASP3 during virus-induced apoptosis inactivates it, preventing cytokine overproduction.

Its subcellular location is the cytoplasm. The protein localises to the nucleus. It is found in the mitochondrion. In the absence of viral infection, maintained as a monomer in an autoinhibited state. Phosphorylation by TBK1 and IKBKE disrupts this autoinhibition leading to the liberation of the DNA-binding and dimerization activities and its nuclear localization where it can activate type I IFN and ISG genes. Phosphorylation and activation follow the following steps: innate adapter proteins, such as MAVS, STING1 or TICAM1, are first activated by viral RNA, cytosolic DNA and bacterial lipopolysaccharide (LPS), respectively, leading to activation of the kinases TBK1 and IKBKE. These kinases then phosphorylate the adapter proteins on their pLxIS motif, leading to recruitment of IRF3, thereby licensing IRF3 for phosphorylation by TBK1. Phosphorylated IRF3 dissociates from the adapter proteins, dimerizes, and then enters the nucleus to induce IFNs. In terms of biological role, key transcriptional regulator of type I interferon (IFN)-dependent immune responses which plays a critical role in the innate immune response against DNA and RNA viruses. Regulates the transcription of type I IFN genes (IFN-alpha and IFN-beta) and IFN-stimulated genes (ISG) by binding to an interferon-stimulated response element (ISRE) in their promoters. Acts as a more potent activator of the IFN-beta (IFNB) gene than the IFN-alpha (IFNA) gene and plays a critical role in both the early and late phases of the IFNA/B gene induction. Found in an inactive form in the cytoplasm of uninfected cells and following viral infection, double-stranded RNA (dsRNA), or toll-like receptor (TLR) signaling, is phosphorylated by IKBKE and TBK1 kinases. This induces a conformational change, leading to its dimerization and nuclear localization and association with CREB binding protein (CREBBP) to form dsRNA-activated factor 1 (DRAF1), a complex which activates the transcription of the type I IFN and ISG genes. Can activate distinct gene expression programs in macrophages and can induce significant apoptosis in primary macrophages. This is Interferon regulatory factor 3 (IRF3) from Sus scrofa (Pig).